The chain runs to 231 residues: ABC transporter ATP-binding protein YtrE (231 aa).

Residues 4–231 form the ABC transporter domain; it reads VQHIDHSFTI…VLKGGITVEV (228 aa). 42-49 serves as a coordination point for ATP; the sequence is GRSGSGKS.

It belongs to the ABC transporter superfamily. In terms of assembly, the complex is composed of 2 ATP-binding proteins (YtrB and YtrE), 2 transmembrane proteins (YtrC and YtrD) and a solute-binding protein (YtrF).

Its subcellular location is the cell membrane. Part of the ABC transporter complex YtrBCDEF that plays a role in acetoin utilization during stationary phase and sporulation. The sequence is that of ABC transporter ATP-binding protein YtrE (ytrE) from Bacillus subtilis (strain 168).